Reading from the N-terminus, the 421-residue chain is Elsinochrome C biosynthesis regulatory protein elcR (421 aa).

The span at 1-16 (MATQLPSPTATTSHSG) shows a compositional bias: polar residues. Residues 1 to 20 (MATQLPSPTATTSHSGNEPR) form a disordered region. The segment at residues 27–54 (CNNCSAQKIRCGKQRPACARCVNKKLQC) is a DNA-binding region (zn(2)-C6 fungal-type).

The protein resides in the nucleus. Its function is as follows. Transcription regulator of the gene cluster that mediates the biosynthesis of elsinochrome C, a perelyenequinone phytotoxin structurally similar to cercosporin. The sequence is that of Elsinochrome C biosynthesis regulatory protein elcR from Phaeosphaeria nodorum (strain SN15 / ATCC MYA-4574 / FGSC 10173) (Glume blotch fungus).